Reading from the N-terminus, the 584-residue chain is 2-isopropylmalate synthase (584 aa).

Residues 40–314 (PRWCAVDLRD…DPQIDFSDIE (275 aa)) enclose the Pyruvate carboxyltransferase domain. Residues aspartate 49, histidine 253, histidine 255, and asparagine 289 each contribute to the Mg(2+) site. The interval 456–584 (SRDGSGSTWG…VRDAQEAAQD (129 aa)) is regulatory domain.

This sequence belongs to the alpha-IPM synthase/homocitrate synthase family. LeuA type 2 subfamily. In terms of assembly, homodimer. Requires Mg(2+) as cofactor.

The protein resides in the cytoplasm. The enzyme catalyses 3-methyl-2-oxobutanoate + acetyl-CoA + H2O = (2S)-2-isopropylmalate + CoA + H(+). It functions in the pathway amino-acid biosynthesis; L-leucine biosynthesis; L-leucine from 3-methyl-2-oxobutanoate: step 1/4. Functionally, catalyzes the condensation of the acetyl group of acetyl-CoA with 3-methyl-2-oxobutanoate (2-ketoisovalerate) to form 3-carboxy-3-hydroxy-4-methylpentanoate (2-isopropylmalate). This Kocuria rhizophila (strain ATCC 9341 / DSM 348 / NBRC 103217 / DC2201) protein is 2-isopropylmalate synthase.